Consider the following 1254-residue polypeptide: Structural polyprotein (1254 aa).

The tract at residues 1-33 (MFPFQPMYPMQPMPYRNPFAAPRRPWFPRTDPF) is necessary for nucleocapsid assembly and virus assembly. The interval 33-68 (FLAMQVQELTRSMANLTFKQRRDAPPEGPSAKKPKK) is host transcription inhibition. The Supraphysiological nuclear export signal motif lies at 41–48 (LTRSMANL). Positions 45–119 (MANLTFKQRR…KKPGKRQRMV (75 aa)) are disordered. Residues 64–68 (KKPKK) carry the Nuclear localization signal motif. A compositionally biased stretch (basic residues) spans 80 to 92 (GKKKKNQGKKKAK). The tract at residues 91–127 (AKTGPPNPKAQNGNKKKTNKKPGKRQRMVMKLESDKT) is binding to the viral RNA. Residues threonine 93 and threonine 108 each carry the phosphothreonine modification. Residues 104–118 (NKKKTNKKPGKRQRM) show a composition bias toward basic residues. The interval 112-126 (PGKRQRMVMKLESDK) is ribosome-binding. At serine 124 the chain carries Phosphoserine. The region spanning 126–275 (KTFPIMLEGK…KYTPENCEQW (150 aa)) is the Peptidase S3 domain. Threonine 127 carries the phosphothreonine modification. Residues histidine 152, aspartate 174, and serine 226 each act as charge relay system in the active site. A functions as an uncleaved signal peptide for the precursor of protein E3/E2 region spans residues 276–287 (SLVTTMCLLANV). Over 276–701 (SLVTTMCLLA…HYYHRYPMST (426 aa)) the chain is Extracellular. N-linked (GlcNAc...) asparagine; by host glycosylation is found at asparagine 286, asparagine 546, and asparagine 652. A helical membrane pass occupies residues 702-722 (ILGLSICAAIATVSVAASTWL). At 723 to 757 (FCRSRVACLTPYRLTPNARIPFCLAVLCCARTARA) the chain is on the cytoplasmic side. Residues cysteine 730, cysteine 750, and cysteine 751 are each lipidated (S-palmitoyl cysteine; by host). The tract at residues 730-750 (CLTPYRLTPNARIPFCLAVLC) is transient transmembrane before p62-6K protein processing. Residues 758–772 (ETTWESLDHLWNNNQ) lie on the Extracellular side of the membrane. The chain crosses the membrane as a helical span at residues 773–793 (QMFWIQLLIPLAALIVVTRLL). Over 794-795 (RC) the chain is Cytoplasmic. A helical membrane pass occupies residues 796–816 (VCCVVPFLVMAGAAAGAYEHA). At 817–1224 (TTMPSQAGIS…SKTAWTWLTS (408 aa)) the chain is on the extracellular side. 4 disulfide bridges follow: cysteine 861–cysteine 926, cysteine 874–cysteine 906, cysteine 875–cysteine 908, and cysteine 880–cysteine 890. The E1 fusion peptide loop stretch occupies residues 896 to 913 (VYPFMWGGAYCFCDTENT). Residue asparagine 946 is glycosylated (N-linked (GlcNAc...) asparagine; by host). 4 cysteine pairs are disulfide-bonded: cysteine 1071/cysteine 1083, cysteine 1113/cysteine 1188, cysteine 1118/cysteine 1192, and cysteine 1140/cysteine 1182. The helical transmembrane segment at 1225 to 1245 (LLGGSAVIIIIGLVLATIVAM) threads the bilayer. At 1246–1254 (YVLTNQKHN) the chain is on the cytoplasmic side.

Homodimer. Homomultimer. Interacts with host karyopherin KPNA4; this interaction allows the nuclear import of the viral capsid protein. Interacts with spike glycoprotein E2. Interacts with host IRAK1; the interaction leads to inhibition of IRAK1-dependent signaling. Part of a tetrameric complex composed of host CRM1, host importin alpha/beta dimer and the viral capsid; this complex blocks the receptor-mediated transport through the nuclear pore. Interacts with host phosphatase PPP1CA; this interaction dephosphorylates the capsid protein, which increases its ability to bind to the viral genome. In terms of assembly, the precursor of protein E3/E2 and E1 form a heterodimer shortly after synthesis. As to quaternary structure, interacts with spike glycoprotein E2. The precursor of protein E3/E2 and E1 form a heterodimer shortly after synthesis. Processing of the precursor of protein E3/E2 into E2 and E3 results in a heterodimer of the spike glycoproteins E2 and E1. Spike at virion surface are constituted of three E2-E1 heterodimers. After target cell attachment and endocytosis, E1 change conformation to form homotrimers. Interacts with 6K protein. Interacts with host LDLRAD3; this interaction mediates viral entry to the host cell. Interacts with spike glycoprotein E1. Processing of the precursor of protein E3/E2 into E2 and E3 results in a heterodimer of the spike glycoproteins E2 and E1. Spike at virion surface are constituted of a trimer of E2-E1 heterodimers. Interacts with 6K protein. Interacts with host LDLRAD3; this interaction mediates viral entry to the host cell. In terms of assembly, oligomer. Interacts with spike glycoprotein E1. Interacts with spike glycoprotein E2. Post-translationally, structural polyprotein: Specific enzymatic cleavages in vivo yield mature proteins. Capsid protein is auto-cleaved during polyprotein translation, unmasking a signal peptide at the N-terminus of the precursor of E3/E2. The remaining polyprotein is then targeted to the host endoplasmic reticulum, where host signal peptidase cleaves it into pE2, 6K and E1 proteins. pE2 is further processed to mature E3 and E2 by host furin in trans-Golgi vesicle. In terms of processing, palmitoylated via thioester bonds. These palmitoylations may induce disruption of the C-terminus transmembrane. This would result in the reorientation of E2 C-terminus from lumenal to cytoplasmic side. Phosphorylated on serine and threonine residues. Post-translationally, N-glycosylated. In terms of processing, palmitoylated via thioester bonds.

It is found in the virion. The protein resides in the host cytoplasm. It localises to the host cell membrane. The protein localises to the host nucleus. Its subcellular location is the virion membrane. The catalysed reaction is Autocatalytic release of the core protein from the N-terminus of the togavirus structural polyprotein by hydrolysis of a -Trp-|-Ser- bond.. Forms an icosahedral capsid with a T=4 symmetry composed of 240 copies of the capsid protein surrounded by a lipid membrane through which penetrate 80 spikes composed of trimers of E1-E2 heterodimers. The capsid protein binds to the viral RNA genome at a site adjacent to a ribosome binding site for viral genome translation following genome release. Possesses a protease activity that results in its autocatalytic cleavage from the nascent structural protein. Following its self-cleavage, the capsid protein transiently associates with ribosomes, and within several minutes the protein binds to viral RNA and rapidly assembles into icosahedric core particles. The resulting nucleocapsid eventually associates with the cytoplasmic domain of the spike glycoprotein E2 at the cell membrane, leading to budding and formation of mature virions. In case of infection, new virions attach to target cells and after clathrin-mediated endocytosis their membrane fuses with the host endosomal membrane. This leads to the release of the nucleocapsid into the cytoplasm, followed by an uncoating event necessary for the genomic RNA to become accessible. The uncoating might be triggered by the interaction of capsid proteins with ribosomes. Binding of ribosomes would release the genomic RNA since the same region is genomic RNA-binding and ribosome-binding. Specifically inhibits interleukin-1 receptor-associated kinase 1/IRAK1-dependent signaling during viral entry, representing a means by which the alphaviruses may evade innate immune detection and activation prior to viral gene expression. Inhibits host transcription. Forms a tetrameric complex with XPO1/CRM1 and the nuclear import receptor importin. This complex blocks the central channel of host nuclear pores thereby inhibiting the receptor-mediated nuclear transport and thus the host mRNA and rRNA transcription. The inhibition of transcription is linked to a cytopathic effect on the host cell. Functionally, provides the signal sequence for the translocation of the precursor of protein E3/E2 to the host endoplasmic reticulum. Furin-cleaved E3 remains associated with spike glycoprotein E1 and mediates pH protection of the latter during the transport via the secretory pathway. After virion release from the host cell, the assembly protein E3 is gradually released in the extracellular space. In terms of biological role, plays a role in viral attachment to target host cell, by binding to the cell receptor LDLRAD3. Synthesized as a p62 precursor which is processed by furin at the cell membrane just before virion budding, giving rise to E2-E1 heterodimer. The p62-E1 heterodimer is stable, whereas E2-E1 is unstable and dissociate at low pH. p62 is processed at the last step, presumably to avoid E1 fusion activation before its final export to cell surface. E2 C-terminus contains a transitory transmembrane that would be disrupted by palmitoylation, resulting in reorientation of the C-terminal tail from lumenal to cytoplasmic side. This step is critical since E2 C-terminus is involved in budding by interacting with capsid proteins. This release of E2 C-terminus in cytoplasm occurs lately in protein export, and precludes premature assembly of particles at the endoplasmic reticulum membrane. Its function is as follows. Acts as a viroporin that participates in virus glycoprotein processing and transport to the plasma membrane, cell permeabilization and budding of viral particles. Disrupts the calcium homeostasis of the cell, probably at the endoplasmic reticulum level. This leads to cytoplasmic calcium elevation. Because of its lipophilic properties, the 6K protein is postulated to influence the selection of lipids that interact with the transmembrane domains of the glycoproteins, which, in turn, affects the deformability of the bilayer required for the extreme curvature that occurs as budding proceeds. Present in low amount in virions, about 3% compared to viral glycoproteins. Class II viral fusion protein. Fusion activity is inactive as long as E1 is bound to E2 in mature virion. After virus attachment to cell receptor LDLRAD3 and endocytosis, acidification of the endosome would induce dissociation of E1/E2 heterodimer and concomitant trimerization of the E1 subunits. This E1 trimer is fusion active, and promotes release of viral nucleocapsid in cytoplasm after endosome and viral membrane fusion. Efficient fusion requires the presence of cholesterol and sphingolipid in the target membrane. Fusion is optimal at levels of about 1 molecule of cholesterol per 2 molecules of phospholipids, and is specific for sterols containing a 3-beta-hydroxyl group. This Bos taurus (Bovine) protein is Structural polyprotein.